The chain runs to 556 residues: Testis-specific protein 10-interacting protein (556 aa).

The span at 1–16 shows a compositional bias: polar residues; the sequence is MGQDTDMLNTYQQLVR. Disordered regions lie at residues 1-31, 50-102, 123-155, and 179-309; these read MGQD…LQAP, GCLG…LLPR, LQPS…ANLP, and GGVS…QWRK. Residues 208-219 show a composition bias toward polar residues; the sequence is GSASDKQVQLQS. Over residues 244 to 258 the composition is skewed to acidic residues; that stretch reads SEEEQFSEATEEAEE. Over residues 289 to 301 the composition is skewed to polar residues; that stretch reads QGQSQGSSPSFNN. Residues 379-464 adopt a coiled-coil conformation; the sequence is RQEATRSLLQ…LQGIQHRVQA (86 aa). The tract at residues 503-556 is disordered; sequence AGKVDREGTPRKPRSHRSMGVRMEHSPQRPPRTEPTGSQPDRHYNPSLDPECSP.

The polypeptide is Testis-specific protein 10-interacting protein (TSGA10IP) (Homo sapiens (Human)).